Reading from the N-terminus, the 330-residue chain is Anthranilate phosphoribosyltransferase (330 aa).

Residues Gly-75, 78-79, Thr-83, 85-88, 103-111, and Ala-115 each bind 5-phospho-alpha-D-ribose 1-diphosphate; these read GD, NVST, and KHGNRAASS. Gly-75 lines the anthranilate pocket. Ser-87 contributes to the Mg(2+) binding site. Asn-106 lines the anthranilate pocket. Arg-161 contributes to the anthranilate binding site. The Mg(2+) site is built by Asp-220 and Glu-221.

The protein belongs to the anthranilate phosphoribosyltransferase family. In terms of assembly, homodimer. It depends on Mg(2+) as a cofactor.

It catalyses the reaction N-(5-phospho-beta-D-ribosyl)anthranilate + diphosphate = 5-phospho-alpha-D-ribose 1-diphosphate + anthranilate. Its pathway is amino-acid biosynthesis; L-tryptophan biosynthesis; L-tryptophan from chorismate: step 2/5. Catalyzes the transfer of the phosphoribosyl group of 5-phosphorylribose-1-pyrophosphate (PRPP) to anthranilate to yield N-(5'-phosphoribosyl)-anthranilate (PRA). This Erythrobacter litoralis (strain HTCC2594) protein is Anthranilate phosphoribosyltransferase.